A 404-amino-acid polypeptide reads, in one-letter code: MKLPIYFDYSATCPVDPRVAEKMMQCLTMDGNFGNPASRSHRFGWQAEEAVDTAREQVADLMNADPREIVFTSGATESDNLAIKGAARFYSKKGKHIITCKTEHKAVLDPCRQLEREGFEVTYLDPEANGLIDMAKLRDAIREDTVLMSIMHVNNEIGVIQDITAIGELCRENKIVFHVDAAQSIGKLPIDVQAMKVDLISVTSHKIYGPKGIGALYVRRKPRIRLEAQMHGGGHERGMRSGTLATHQIVGMGEAFRIAKEEMEQDRVHTLALRTRLLDGLKDMESVHINGDLEQRVSSNLNISFAFVEGESLLMALKDLAVSSGSACTSASLEPSYVLRALGLDDELAHSSIRFSFGRFSTEEEIDYAITQIRTAVEKLRDMSPLWDMHKEGIDLNSVEWAHH.

Residues 75 to 76 (AT), Asn155, Gln183, and 203 to 205 (TSH) contribute to the pyridoxal 5'-phosphate site. Lys206 carries the N6-(pyridoxal phosphate)lysine modification. Thr243 contributes to the pyridoxal 5'-phosphate binding site. Cys328 serves as the catalytic Cysteine persulfide intermediate. Cys328 provides a ligand contact to [2Fe-2S] cluster.

It belongs to the class-V pyridoxal-phosphate-dependent aminotransferase family. NifS/IscS subfamily. In terms of assembly, homodimer. Forms a heterotetramer with IscU, interacts with other sulfur acceptors. The cofactor is pyridoxal 5'-phosphate.

The protein resides in the cytoplasm. The catalysed reaction is (sulfur carrier)-H + L-cysteine = (sulfur carrier)-SH + L-alanine. Its pathway is cofactor biosynthesis; iron-sulfur cluster biosynthesis. Its function is as follows. Master enzyme that delivers sulfur to a number of partners involved in Fe-S cluster assembly, tRNA modification or cofactor biosynthesis. Catalyzes the removal of elemental sulfur atoms from cysteine to produce alanine. Functions as a sulfur delivery protein for Fe-S cluster synthesis onto IscU, an Fe-S scaffold assembly protein, as well as other S acceptor proteins. In Photobacterium profundum (strain SS9), this protein is Cysteine desulfurase IscS.